The primary structure comprises 370 residues: 2-aminoethylphosphonate--pyruvate transaminase 2 (370 aa).

At Lys194 the chain carries N6-(pyridoxal phosphate)lysine.

Belongs to the class-V pyridoxal-phosphate-dependent aminotransferase family. PhnW subfamily. Homodimer. The cofactor is pyridoxal 5'-phosphate.

It catalyses the reaction (2-aminoethyl)phosphonate + pyruvate = phosphonoacetaldehyde + L-alanine. Involved in phosphonate degradation. This chain is 2-aminoethylphosphonate--pyruvate transaminase 2, found in Paraburkholderia xenovorans (strain LB400).